The sequence spans 337 residues: Methylthioribose-1-phosphate isomerase (337 aa).

Substrate contacts are provided by residues 47 to 49, Arg-81, and Gln-184; that span reads RGA. Asp-225 acts as the Proton donor in catalysis. 235–236 provides a ligand contact to substrate; sequence NK.

Belongs to the eIF-2B alpha/beta/delta subunits family. MtnA subfamily.

The enzyme catalyses 5-(methylsulfanyl)-alpha-D-ribose 1-phosphate = 5-(methylsulfanyl)-D-ribulose 1-phosphate. It participates in amino-acid biosynthesis; L-methionine biosynthesis via salvage pathway; L-methionine from S-methyl-5-thio-alpha-D-ribose 1-phosphate: step 1/6. Its function is as follows. Catalyzes the interconversion of methylthioribose-1-phosphate (MTR-1-P) into methylthioribulose-1-phosphate (MTRu-1-P). The sequence is that of Methylthioribose-1-phosphate isomerase from Parasynechococcus marenigrum (strain WH8102).